The sequence spans 908 residues: MATIHVDGKEYEVNGADNLLEACLSLGLDIPYFCWHPALGSVGACRQCAVKQYQNAEDTRGRLVMSCMTPASDGTFISIDDEEAKQFRESVVEWLMTNHPHDCPVCEEGGNCHLQDMTVMTGHSFRRYRFTKRTHRNQDLGPFISHEMNRCIACYRCVRYYKDYADGTDLGVYGAHDNVYFGRPEDGTLESEFSGNLVEICPTGVFTDKTHSERYNRKWDMQFAPSICQQCSIGCNISPGERYGELRRIENRYNGTVNHYFLCDRGRFGYGYVNLKDRPRQPVQRRGDDFITLNAEQAMQGAADILRQSKKVIGIGSPRASVESNFALRELVGEENFYTGIAHGEQERLQLALKVLREGGIYTPALREIESYDAVLVLGEDVTQTGARVALAVRQAVKGKAREMAAAQKVADWQIAAILNIGQRAKHPLFVTNVDDTRLDDIAAWTYRAPVEDQARLGFAIAHALDNSAPAVDGIEPELQNKIDVIVQALAGAKKPLIISGTNAGSIEVIQAAANVAKALKGRGADVGITMIARSVNSMGLGIMGGGSLEEALTELETGRADAVVVLENDLHRYASATRVNAALAKAPLVMVVDHQRTAIMENAHLVLSSASFAESDGTVINNEGRAQRFFQVYDPAYYDSKTVMLESWRWLHSLHSTLLSREVDWTQLDHVIDAVVAKIPELAGIKDAAPDATFRIRGQKLAREPHRYSGRTAMRANISVHEPRQPQDIDTMFTFSMEGNNQPTAHRSQVPFAWAPGWNSPQAWNKFQDEVGGKLRFGDPGVRLFETSENGLDYFTSVPARFQPQDGKWRIAPYYHLFGSDELSQRAPVFQSRMPQPYIKLNPADAAKLGVNAGTRVSFSYDGNTVTLPVEIAEGLTAGQVGLPMGMSGIAPVLAGAHLEDLKEAQQ.

Residues 2 to 83 (ATIHVDGKEY…GTFISIDDEE (82 aa)) form the 2Fe-2S ferredoxin-type domain. [2Fe-2S] cluster-binding residues include cysteine 34, cysteine 45, cysteine 48, and cysteine 67. One can recognise a 4Fe-4S His(Cys)3-ligated-type domain in the interval 83–122 (EAKQFRESVVEWLMTNHPHDCPVCEEGGNCHLQDMTVMTG). [4Fe-4S] cluster-binding residues include histidine 99, cysteine 103, cysteine 106, cysteine 112, cysteine 151, cysteine 154, cysteine 157, cysteine 201, cysteine 228, cysteine 231, cysteine 235, and cysteine 263. The region spanning 221–277 (MQFAPSICQQCSIGCNISPGERYGELRRIENRYNGTVNHYFLCDRGRFGYGYVNLKD) is the 4Fe-4S Mo/W bis-MGD-type domain.

Belongs to the complex I 75 kDa subunit family. Composed of 13 different subunits. Subunits NuoCD, E, F, and G constitute the peripheral sector of the complex. Requires [2Fe-2S] cluster as cofactor. The cofactor is [4Fe-4S] cluster.

It catalyses the reaction a quinone + NADH + 5 H(+)(in) = a quinol + NAD(+) + 4 H(+)(out). NDH-1 shuttles electrons from NADH, via FMN and iron-sulfur (Fe-S) centers, to quinones in the respiratory chain. The immediate electron acceptor for the enzyme in this species is believed to be ubiquinone. Couples the redox reaction to proton translocation (for every two electrons transferred, four hydrogen ions are translocated across the cytoplasmic membrane), and thus conserves the redox energy in a proton gradient. This is NADH-quinone oxidoreductase subunit G (nuoG) from Shigella flexneri.